Here is a 561-residue protein sequence, read N- to C-terminus: MKKVWLNRYPADVPTEINPDRYQSLVDMFEQSVARYADQPAFVNMGEVMTFRKLEERSRAFAAYLQQGLGLKKGDRVALMMPNLLQYPVALFGILRAGMIVVNVNPLYTPRELEHQLNDSGASAIVIVSNFAHTLEKVVDKTAVQHVILTRMGDQLSTAKGTVVNFVVKYIKRLVPKYHLPDAISFRSALHNGYRMQYVKPELVPEDLAFLQYTGGTTGVAKGAMLTHRNMLANLEQVNATYGPLLHPGKELVVTALPLYHIFALTINCLLFIELGGQNLLITNPRDIPGLVKELAKYPFTAITGVNTLFNALLNNKEFQQLDFSSLHLSAGGGMPVQQVVAERWVKLTGQYLLEGYGLTECAPLVSVNPYDIDYHSGSIGLPVPSTEAKLVDDDDNEVPPGQPGELCVKGPQVMLGYWQRPDATDEIIKNGWLHTGDIAVMDEEGFLRIVDRKKDMILVSGFNVYPNEIEDVVMQHPGVQEVAAVGVPSGSSGEAVKIFVVKKDPSLTEESLVTFCRRQLTGYKVPKLVEFRDELPKSNVGKILRRELRDEARGKVDNKA.

213–224 (YTGGTTGVAKGA) is a binding site for ATP.

The protein belongs to the ATP-dependent AMP-binding enzyme family. The cofactor is Mg(2+).

It localises to the membrane. The enzyme catalyses a long-chain fatty acid + ATP + CoA = a long-chain fatty acyl-CoA + AMP + diphosphate. The protein operates within lipid metabolism; fatty acid beta-oxidation. Catalyzes the esterification, concomitant with transport, of exogenous long-chain fatty acids into metabolically active CoA thioesters for subsequent degradation or incorporation into phospholipids. The polypeptide is Long-chain-fatty-acid--CoA ligase (fadD) (Escherichia coli O6:H1 (strain CFT073 / ATCC 700928 / UPEC)).